Consider the following 174-residue polypeptide: ATP-dependent protease subunit HslV (174 aa).

Residue Thr2 is part of the active site. The Na(+) site is built by Gly157, Cys160, and Thr163.

This sequence belongs to the peptidase T1B family. HslV subfamily. As to quaternary structure, a double ring-shaped homohexamer of HslV is capped on each side by a ring-shaped HslU homohexamer. The assembly of the HslU/HslV complex is dependent on binding of ATP.

The protein localises to the cytoplasm. It carries out the reaction ATP-dependent cleavage of peptide bonds with broad specificity.. Allosterically activated by HslU binding. Protease subunit of a proteasome-like degradation complex believed to be a general protein degrading machinery. This is ATP-dependent protease subunit HslV from Shewanella denitrificans (strain OS217 / ATCC BAA-1090 / DSM 15013).